The sequence spans 178 residues: Ribosome maturation factor RimM (178 aa).

The PRC barrel domain occupies aspartate 100 to phenylalanine 178.

This sequence belongs to the RimM family. Binds ribosomal protein uS19.

It is found in the cytoplasm. An accessory protein needed during the final step in the assembly of 30S ribosomal subunit, possibly for assembly of the head region. Essential for efficient processing of 16S rRNA. May be needed both before and after RbfA during the maturation of 16S rRNA. It has affinity for free ribosomal 30S subunits but not for 70S ribosomes. In Azotobacter vinelandii (strain DJ / ATCC BAA-1303), this protein is Ribosome maturation factor RimM.